We begin with the raw amino-acid sequence, 185 residues long: Ribosome-recycling factor (185 aa).

Belongs to the RRF family.

The protein resides in the cytoplasm. In terms of biological role, responsible for the release of ribosomes from messenger RNA at the termination of protein biosynthesis. May increase the efficiency of translation by recycling ribosomes from one round of translation to another. This chain is Ribosome-recycling factor, found in Clostridium botulinum (strain Eklund 17B / Type B).